A 567-amino-acid polypeptide reads, in one-letter code: Dynein, 70 kDa intermediate chain, flagellar outer arm (567 aa).

4 WD repeats span residues 214–254 (VPTS…GPVE), 261–302 (SHRD…ECVE), 360–399 (GHHG…KTPI), and 404–444 (YHPT…NEPT).

Belongs to the dynein intermediate chain family. Consists of at least 3 heavy chains (alpha, beta and gamma), 2 intermediate chains and 8 light chains.

The protein localises to the cytoplasm. Its subcellular location is the cytoskeleton. It localises to the flagellum axoneme. Its function is as follows. May play a role in regulating dynein heavy chain (DHC) activity. May function in holding IC78 to the DHC, or in stabilizing the entire dynein complex. In Chlamydomonas reinhardtii (Chlamydomonas smithii), this protein is Dynein, 70 kDa intermediate chain, flagellar outer arm (ODA6).